We begin with the raw amino-acid sequence, 201 residues long: Putative manganese efflux pump MntP (201 aa).

6 consecutive transmembrane segments (helical) span residues 3–23, 39–59, 65–85, 116–136, 141–161, and 176–196; these read LVSI…VSIT, IGLF…SIGI, IAAL…GKMI, LTLL…SFAF, IINT…IGVM, and ILGG…HTNI.

The protein belongs to the MntP (TC 9.B.29) family.

The protein localises to the cell membrane. Functionally, probably functions as a manganese efflux pump. The polypeptide is Putative manganese efflux pump MntP (Clostridium botulinum (strain Loch Maree / Type A3)).